A 471-amino-acid polypeptide reads, in one-letter code: Glutamate--tRNA ligase (471 aa).

Residues 9 to 19 (PSPTGYLHVGG) carry the 'HIGH' region motif. Zn(2+) is bound by residues C98, C100, C125, and H127. A 'KMSKS' region motif is present at residues 237–241 (KLSKR). Residue K240 participates in ATP binding.

Belongs to the class-I aminoacyl-tRNA synthetase family. Glutamate--tRNA ligase type 1 subfamily. Monomer. Zn(2+) is required as a cofactor.

The protein localises to the cytoplasm. The catalysed reaction is tRNA(Glu) + L-glutamate + ATP = L-glutamyl-tRNA(Glu) + AMP + diphosphate. Its function is as follows. Catalyzes the attachment of glutamate to tRNA(Glu) in a two-step reaction: glutamate is first activated by ATP to form Glu-AMP and then transferred to the acceptor end of tRNA(Glu). This is Glutamate--tRNA ligase from Salmonella choleraesuis (strain SC-B67).